The primary structure comprises 187 residues: Elongation factor P (187 aa).

Belongs to the elongation factor P family.

The protein localises to the cytoplasm. The protein operates within protein biosynthesis; polypeptide chain elongation. Functionally, involved in peptide bond synthesis. Stimulates efficient translation and peptide-bond synthesis on native or reconstituted 70S ribosomes in vitro. Probably functions indirectly by altering the affinity of the ribosome for aminoacyl-tRNA, thus increasing their reactivity as acceptors for peptidyl transferase. The sequence is that of Elongation factor P from Rhizorhabdus wittichii (strain DSM 6014 / CCUG 31198 / JCM 15750 / NBRC 105917 / EY 4224 / RW1) (Sphingomonas wittichii).